A 615-amino-acid chain; its full sequence is DNA mismatch repair protein MutL (615 aa).

Residues 362 to 397 are disordered; the sequence is HFAEPAVREPVAPRYSPAPASGSRPAASWPNAQPGY. Residues 373–391 show a composition bias toward low complexity; that stretch reads APRYSPAPASGSRPAASWP.

Belongs to the DNA mismatch repair MutL/HexB family.

Functionally, this protein is involved in the repair of mismatches in DNA. It is required for dam-dependent methyl-directed DNA mismatch repair. May act as a 'molecular matchmaker', a protein that promotes the formation of a stable complex between two or more DNA-binding proteins in an ATP-dependent manner without itself being part of a final effector complex. This is DNA mismatch repair protein MutL from Escherichia coli O6:H1 (strain CFT073 / ATCC 700928 / UPEC).